Here is a 177-residue protein sequence, read N- to C-terminus: Large ribosomal subunit protein uL6 (177 aa).

The protein belongs to the universal ribosomal protein uL6 family. Part of the 50S ribosomal subunit.

This protein binds to the 23S rRNA, and is important in its secondary structure. It is located near the subunit interface in the base of the L7/L12 stalk, and near the tRNA binding site of the peptidyltransferase center. This is Large ribosomal subunit protein uL6 from Nitrobacter winogradskyi (strain ATCC 25391 / DSM 10237 / CIP 104748 / NCIMB 11846 / Nb-255).